A 342-amino-acid chain; its full sequence is Serpentine receptor class delta-33 (342 aa).

A run of 7 helical transmembrane segments spans residues 26-46 (IFVI…LLLL), 62-82 (IFLA…VTSM), 112-132 (YVGI…SMIY), 148-168 (IILC…CSNI), 205-225 (LIIL…VMYW), 261-281 (IIPL…QLGF), and 287-307 (YSYF…VVTI).

The protein belongs to the nematode receptor-like protein srd family.

The protein localises to the membrane. This chain is Serpentine receptor class delta-33 (srd-33), found in Caenorhabditis elegans.